The sequence spans 1640 residues: Basal body protein 10 (1640 aa).

The interval 11–64 (VLRRKLEALGYSDPLEPASLQLVQKLVEDLVHTTDSYTAVKQQCAKQAQEIAAF) is homodimerization. The stretch at 93-148 (AERHEREAREHYTAVKRLEDTIAELSYWKHAAAEKLASADKENAGLRKRCEELAKL) forms a coiled coil. Residues 154–185 (SGAATPQSVAPKISSRSPIRVAPPPSPPRPRQ) form a disordered region. Residues 174–183 (VAPPPSPPRP) are compositionally biased toward pro residues. 10 coiled-coil regions span residues 191 to 232 (LQAA…RDVE), 260 to 332 (ILQL…LQDT), 370 to 411 (VERL…AQSR), 461 to 722 (FAAL…AEAD), 758 to 960 (ARQM…AQAA), 1010 to 1030 (GEALREELRAVSEDLEALVRE), 1059 to 1086 (RASAEQLLRAKEAEAEDLRRVYEALAAE), 1129 to 1282 (INQY…LQAS), 1323 to 1494 (AKDQ…AERD), and 1523 to 1557 (AELASRRLRELQTQVDALEAEKAGLEEATQRTRAT). Low complexity predominate over residues 1592-1618 (GQGQVQGPAGTAPAAAAGAPGPQPGQA). Residues 1592-1640 (GQGQVQGPAGTAPAAAAGAPGPQPGQAQAGGFGGAHGGGSISLSGGPRR) form a disordered region. The span at 1619 to 1631 (QAGGFGGAHGGGS) shows a compositional bias: gly residues.

The protein belongs to the CEP135/TSGA10 family. Homodimer.

It is found in the cytoplasm. The protein resides in the cytoskeleton. The protein localises to the microtubule organizing center. Its subcellular location is the centrosome. It localises to the centriole. In terms of biological role, microtubule-binding protein essential for cytoskeletal organization (e.g. rootlet microtubule bundles) and flagellar basal body/centriole assembly. In Chlamydomonas reinhardtii (Chlamydomonas smithii), this protein is Basal body protein 10.